Consider the following 855-residue polypeptide: Vomeronasal type-2 receptor 26 (855 aa).

A signal peptide spans 1–22 (MKLLTAFSPLVVLILFQEQISC). Over 23-595 (YYLTKYASSG…FLAHEDPLGT (573 aa)) the chain is Extracellular. 2 N-linked (GlcNAc...) asparagine glycosylation sites follow: asparagine 101 and asparagine 295. A helical transmembrane segment spans residues 596 to 616 (VLVSLAISLSAFSAMILGLFI). Topologically, residues 617–630 (CYRETPIVRANNRN) are cytoplasmic. The chain crosses the membrane as a helical span at residues 631 to 651 (LSYLLLISLKLCFSCSLMFIG). Residues 652–662 (QPRTVTCVLRQ) are Extracellular-facing. A helical transmembrane segment spans residues 663–683 (IIFGIVFSIVISAILAKTFIV). The Cytoplasmic portion of the chain corresponds to 684 to 706 (VMAFKAIKPGSILKMGMVTRLSN). The chain crosses the membrane as a helical span at residues 707–727 (AIVCCGSIIQVCICAVWLGTY). The Extracellular portion of the chain corresponds to 728 to 753 (PPFPDVDMHSEFGQIILWCNEGSTLA). A helical transmembrane segment spans residues 754 to 774 (FYCVLGYLGFLASLSLLIAFL). Residues 775–786 (ARRLPDSFNEAK) lie on the Cytoplasmic side of the membrane. A helical transmembrane segment spans residues 787 to 807 (TITFSMLVFCSVWISFVPAYL). The Extracellular portion of the chain corresponds to 808–814 (SSKGKTM). A helical transmembrane segment spans residues 815–835 (VAVEILSILASSAGLLGCIFL). Residues 836-855 (PKCYVILLKSGGHSRKKFFK) lie on the Cytoplasmic side of the membrane.

Belongs to the G-protein coupled receptor 3 family. Expressed in the basal epithelium of the vomeronasal organ. Located to vomeronasal sensory neurons that project their axons to six to ten glomeruli that reside in globally conserved areas within the caudal accessory olfactory bulb (AOB).

The protein localises to the cell membrane. In terms of biological role, putative pheromone receptor. This is Vomeronasal type-2 receptor 26 (Vmn2r26) from Mus musculus (Mouse).